The primary structure comprises 637 residues: Sodium-dependent phosphate transport protein 2A (637 aa).

Residues 1-103 (MMSYSERLGG…LAQVGTKLLK (103 aa)) are Cytoplasmic-facing. A phosphoserine mark is found at serine 14 and serine 34. A helical membrane pass occupies residues 104-125 (VPLMLAFLYLFVCSLDVLSSAF). At 126 to 145 (QLAGGKVAGDIFKDNAILSN) the chain is on the extracellular side. Residues 146-163 (PVAGLVVGILVTVLVQSS) traverse the membrane as a helical segment. The Cytoplasmic segment spans residues 164–165 (ST). A helical transmembrane segment spans residues 166–185 (STSIIVSMVSSGLLEVSSAI). Residues 186–345 (PIIMGSNIGT…HIFVDTGLPD (160 aa)) are Extracellular-facing. 2 cysteine pairs are disulfide-bonded: cysteine 225–cysteine 520 and cysteine 306–cysteine 334. 2 N-linked (GlcNAc...) asparagine glycosylation sites follow: asparagine 298 and asparagine 328. A helical membrane pass occupies residues 346 to 368 (LAVGLILLAGSLVVLCTCLILLV). Residues 369-410 (KMLNSLLKGQVMSSRRSSTQTDFPAPFTWVTGYFAMVVGASM) lie on the Cytoplasmic side of the membrane. Residues 411 to 434 (TFVVQSSSVFTSAITPLIGLGVIS) traverse the membrane as a helical segment. At 435-464 (IERAYPLTLGSNIGTTTTAILAALASPREK) the chain is on the extracellular side. A helical transmembrane segment spans residues 465 to 485 (LSSSFQIALCHFFFNISGILL). Residues 486–511 (WYPLPCTRLPIRMAKALGKRTAKYRW) lie on the Cytoplasmic side of the membrane. Threonine 506 is subject to Phosphothreonine; by PKC. A helical membrane pass occupies residues 512–532 (FAVLYLLVCFLLLPSLVFGIS). Topologically, residues 533–537 (MAGWQ) are extracellular. The helical transmembrane segment at 538-559 (AMVGVGTPFGALLAFVVLVNVL) threads the bilayer. Residues 560–637 (QSRSPGHLPK…LPAHHNATRL (78 aa)) are Cytoplasmic-facing. Phosphoserine is present on serine 605. Threonine 621 carries the post-translational modification Phosphothreonine. Residue serine 623 is modified to Phosphoserine.

This sequence belongs to the SLC34A transporter family. In terms of assembly, interacts via its C-terminal region with NHERF4. Interacts with NHERF1. Interacts with TMEM174; regulates SLC34A1 internalization by PTH and FGF23. As to expression, kidney.

It localises to the apical cell membrane. The protein localises to the cell membrane. It carries out the reaction 3 Na(+)(out) + phosphate(out) = 3 Na(+)(in) + phosphate(in). Its function is as follows. Involved in actively transporting phosphate into cells via Na(+) cotransport in the renal brush border membrane. The cotransport has a Na(+):Pi stoichiometry of 3:1 and is electrogenic. This chain is Sodium-dependent phosphate transport protein 2A, found in Mus musculus (Mouse).